The following is a 419-amino-acid chain: Carboxypeptidase A2 (419 aa).

The signal sequence occupies residues 1–18 (MAMRLILFFGALFGHIYC). A propeptide spans 19 to 114 (LETFVGDQVL…EMLFNRRRER (96 aa)) (activation peptide). The region spanning 122–414 (AYHTLEEISQ…LGLKAIMEHV (293 aa)) is the Peptidase M14 domain. Positions 179 and 182 each coordinate Zn(2+). Substrate is bound by residues 179–182 (HARE), R237, and 254–255 (NR). C248 and C271 are oxidised to a cystine. H306 provides a ligand contact to Zn(2+). 307-308 (SY) serves as a coordination point for substrate. C320 and C354 form a disulfide bridge. Y358 contributes to the substrate binding site. The active-site Proton donor/acceptor is the E380.

This sequence belongs to the peptidase M14 family. Requires Zn(2+) as cofactor.

The protein resides in the secreted. The enzyme catalyses Similar to that of carboxypeptidase A (EC 3.4.17.1), but with a preference for bulkier C-terminal residues.. In terms of biological role, carboxypeptidase that catalyzes the release of a C-terminal amino acid, with a preference for large aromatic C-terminal residues. The protein is Carboxypeptidase A2 (CPA2) of Homo sapiens (Human).